Reading from the N-terminus, the 95-residue chain is MLKFNEYFTGKVKSIGFDSDSIGPASVGVMEKGEYTFSTAKAEEMTVITGSLKVLIPGSPDWQTFMPGETFYIPGESEFNLQVAEASSYLCKYLS.

The protein belongs to the nucleoside phosphorylase PpnP family.

It catalyses the reaction a purine D-ribonucleoside + phosphate = a purine nucleobase + alpha-D-ribose 1-phosphate. The enzyme catalyses adenosine + phosphate = alpha-D-ribose 1-phosphate + adenine. The catalysed reaction is cytidine + phosphate = cytosine + alpha-D-ribose 1-phosphate. It carries out the reaction guanosine + phosphate = alpha-D-ribose 1-phosphate + guanine. It catalyses the reaction inosine + phosphate = alpha-D-ribose 1-phosphate + hypoxanthine. The enzyme catalyses thymidine + phosphate = 2-deoxy-alpha-D-ribose 1-phosphate + thymine. The catalysed reaction is uridine + phosphate = alpha-D-ribose 1-phosphate + uracil. It carries out the reaction xanthosine + phosphate = alpha-D-ribose 1-phosphate + xanthine. In terms of biological role, catalyzes the phosphorolysis of diverse nucleosides, yielding D-ribose 1-phosphate and the respective free bases. Can use uridine, adenosine, guanosine, cytidine, thymidine, inosine and xanthosine as substrates. Also catalyzes the reverse reactions. The chain is Pyrimidine/purine nucleoside phosphorylase from Yersinia pestis bv. Antiqua (strain Antiqua).